Consider the following 357-residue polypeptide: MAPRRVRSFLRGLPALLLLLLFLGPWPAASHGGKYSREKNQPKPSPKRESGEEFRMEKLNQLWEKAQRLHLPPVRLAELHADLKIQERDELAWKKLKLDGLDEDGEKEARLIRNLNVILAKYGLDGKKDARQVTSNSLSGTQEDGLDDPRLEKLWHKAKTSGKFSGEELDKLWREFLHHKEKVHEYNVLLETLSRTEEIHENVISPSDLSDIKGSVLHSRHTELKEKLRSINQGLDRLRRVSHQGYSTEAEFEEPRVIDLWDLAQSANLTDKELEAFREELKHFEAKIEKHNHYQKQLEIAHEKLRHAESVGDGERVSRSREKHALLEGRTKELGYTVKKHLQDLSGRISRARHNEL.

The signal sequence occupies residues 1–34 (MAPRRVRSFLRGLPALLLLLLFLGPWPAASHGGK). Positions 32-52 (GGKYSREKNQPKPSPKRESGE) are disordered. The segment covering 35–52 (YSREKNQPKPSPKRESGE) has biased composition (basic and acidic residues). Serine 50 and serine 135 each carry phosphoserine. Positions 219 to 310 (SRHTELKEKL…AHEKLRHAES (92 aa)) form a coiled coil. An LDL receptor binding region spans residues 237 to 353 (RLRRVSHQGY…DLSGRISRAR (117 aa)). The residue at position 248 (threonine 248) is a Phosphothreonine. Asparagine 268 carries N-linked (GlcNAc...) asparagine glycosylation. The Prevents secretion from ER signature appears at 354–357 (HNEL).

This sequence belongs to the alpha-2-MRAP family. In terms of assembly, interacts with the LRP1/alpha-2-macroglobulin receptor heavy and light chains; the interaction is transient and coincides with a reduction of ligand binding by the receptor. Interacts with LRP2/glycoprotein 330. Interacts with LRP1B; binding is followed by internalization and degradation. Interacts with LDLR. Interacts with SORL1. Interacts with LRP1; this interaction is followed by rapid internalization. In terms of processing, N-glycosylated.

It is found in the rough endoplasmic reticulum lumen. The protein localises to the endoplasmic reticulum-Golgi intermediate compartment lumen. It localises to the golgi apparatus. Its subcellular location is the cis-Golgi network. The protein resides in the golgi apparatus lumen. It is found in the endosome lumen. The protein localises to the cell surface. Molecular chaperone for LDL receptor-related proteins that may regulate their ligand binding activity along the secretory pathway. The chain is Alpha-2-macroglobulin receptor-associated protein from Homo sapiens (Human).